Here is a 500-residue protein sequence, read N- to C-terminus: MVEKSVHEINKKIEDGSVNVVTAEEMVGIVENLGVEGAAREVDVVTTGTFGAMCSSGLMLNLGHSEPPIKIQKLWFNNVEAYSGLAAVDAYLGAAQISDTRGIQYGGAHVIEDLLRGKELDVHATSYGTDCYPRKVLDTRITLDDLNEAVLLNPRNAYQKYAAATNSSKRILNTYMGELLPNFGNVTYSGAGVLSPLSNDPDYETIGMGTRIFMGGAQGYIIGNGTQHSPSSSFGTLMLKGNLKEMSSDYLRAASFAGYGTTLYMGIGIPIPILNEKIAASTAVRDEDIFTDILDYAVGSRDKPVIKQVNYAELRSGSIELEGKNTPTSSLSSFKNARKIANELKEWVKHGKFFVSMPVEKLSREGSAKSMKQTQAVPLVKDVMADFIVTIKKNQTVQDAAKKIWENSFNHLAVVSDTGELVGILTAWDISKAVAENIFDSVESVMTKKVLTCAPNEPVDLAARRLDRYGVSAMPVIDTQRKVLGIITSDNISKLLARRY.

Catalysis depends on cysteine 131, which acts as the Cysteine persulfide intermediate. 2 consecutive CBS domains span residues 384-441 (MADF…IFDS) and 446-500 (MTKK…ARRY).

This sequence belongs to the L-aspartate semialdehyde sulfurtransferase family. In terms of assembly, forms homodimers. May form a complex with MA_1822.

The enzyme catalyses L-aspartate 4-semialdehyde + reduced 2[4Fe-4S]-[ferredoxin] + hydrogen sulfide + 3 H(+) = oxidized 2[4Fe-4S]-[ferredoxin] + L-homocysteine + H2O. The protein operates within amino-acid biosynthesis. Functionally, required for O-acetylhomoserine sulfhydrylase (OAHS)-independent homocysteine (Hcy) biosynthesis. Together with MA_1822, catalyzes the condensation of sulfide with aspartate semialdehyde to generate homocysteine. Likely functions through persulfide intermediate. This is L-aspartate semialdehyde sulfurtransferase from Methanosarcina acetivorans (strain ATCC 35395 / DSM 2834 / JCM 12185 / C2A).